The primary structure comprises 292 residues: Phosphatidylglycerol--prolipoprotein diacylglyceryl transferase (292 aa).

Transmembrane regions (helical) follow at residues 18 to 38, 67 to 87, and 105 to 125; these read LFGVTFALRWYALAYIAGLLI, LLTWVILGVILGGRLGFVLFY, and GGMSFHGGFLGVMTALVAFCL. R150 provides a ligand contact to a 1,2-diacyl-sn-glycero-3-phospho-(1'-sn-glycerol). Transmembrane regions (helical) follow at residues 193 to 213, 222 to 242, and 266 to 286; these read QIYEAGLEGILLFTVLSLLVW, GSVSGMFLAGYGATRFLVEFV, and GLTMGQILSLPMILLGLYLIL.

It belongs to the Lgt family.

Its subcellular location is the cell inner membrane. It carries out the reaction L-cysteinyl-[prolipoprotein] + a 1,2-diacyl-sn-glycero-3-phospho-(1'-sn-glycerol) = an S-1,2-diacyl-sn-glyceryl-L-cysteinyl-[prolipoprotein] + sn-glycerol 1-phosphate + H(+). Its pathway is protein modification; lipoprotein biosynthesis (diacylglyceryl transfer). Functionally, catalyzes the transfer of the diacylglyceryl group from phosphatidylglycerol to the sulfhydryl group of the N-terminal cysteine of a prolipoprotein, the first step in the formation of mature lipoproteins. This is Phosphatidylglycerol--prolipoprotein diacylglyceryl transferase from Cereibacter sphaeroides (strain ATCC 17023 / DSM 158 / JCM 6121 / CCUG 31486 / LMG 2827 / NBRC 12203 / NCIMB 8253 / ATH 2.4.1.) (Rhodobacter sphaeroides).